We begin with the raw amino-acid sequence, 733 residues long: tRNA (guanine(27)-N(2))-dimethyltransferase (733 aa).

Residues 1-18 show a composition bias toward acidic residues; it reads MENMAEEELLPLEKEEVE. The interval 1–78 is disordered; it reads MENMAEEELL…LASAPEEAKS (78 aa). T26 carries the post-translational modification Phosphothreonine. Composition is skewed to low complexity over residues 39-49 and 57-73; these read PDSALDSAPTP and PALA…ASAP. A Phosphoserine modification is found at S66. Positions 135-139 match the Nucleolar localization signal motif; it reads HKLRR. The segment at 184–206 adopts a C2H2-type zinc-finger fold; the sequence is YHCIICSATITRRTDMLGHVRRH. The Trm1 methyltransferase domain occupies 227–688; the sequence is EILKEADTDV…APLMQFKSIL (462 aa). Residues R260, D307, D357, and A358 each coordinate S-adenosyl-L-methionine. Zn(2+) is bound by residues C488, C491, C513, and C515. Residue K585 forms a Glycyl lysine isopeptide (Lys-Gly) (interchain with G-Cter in SUMO2) linkage. Phosphoserine is present on residues S612 and S707.

Belongs to the class I-like SAM-binding methyltransferase superfamily. Trm1 family. Widely expressed.

It is found in the nucleus. Its subcellular location is the nucleolus. It catalyses the reaction guanosine(27) in tRNA(Tyr) + 2 S-adenosyl-L-methionine = N(2)-dimethylguanosine(27) in tRNA(Tyr) + 2 S-adenosyl-L-homocysteine + 2 H(+). Specifically dimethylates a single guanine residue at position 27 of tRNA(Tyr) using S-adenosyl-L-methionine as donor of the methyl groups. Dimethylation at position 27 of tRNA(Tyr) is required for efficient translation of tyrosine codons. Also required to maintain 3-(3-amino-3-carboxypropyl)uridine (acp3U) in the D-loop of several cytoplasmic tRNAs. The chain is tRNA (guanine(27)-N(2))-dimethyltransferase from Homo sapiens (Human).